A 194-amino-acid polypeptide reads, in one-letter code: Mersacidin decarboxylase (194 aa).

The active site involves His75.

The protein belongs to the HFCD (homooligomeric flavin containing Cys decarboxylase) superfamily. In terms of assembly, homododecamer. The cofactor is FAD.

The protein operates within antibiotic biosynthesis; mersacidin biosynthesis. Catalyzes the oxidative decarboxylation of the C-terminal cysteine residue of mersacidin to an aminoenethiol residue. This Bacillus sp. (strain HIL-Y85/54728) protein is Mersacidin decarboxylase (mrsD).